We begin with the raw amino-acid sequence, 425 residues long: Terminal nucleotidyltransferase 5B (425 aa).

Positions 1-42 are disordered; that stretch reads MMPSESGAERRDRAAAQVGTAAATAVATAAPAGGGPDPEALS. A compositionally biased stretch (low complexity) spans 15–31; the sequence is AAQVGTAAATAVATAAP.

This sequence belongs to the TENT family.

Its subcellular location is the cytoplasm. It is found in the nucleus. It catalyses the reaction RNA(n) + ATP = RNA(n)-3'-adenine ribonucleotide + diphosphate. Its function is as follows. Catalyzes the transfer of one adenosine molecule from an ATP to an mRNA poly(A) tail bearing a 3'-OH terminal group in an ATP hydrolysis-dependent manner. May be involved in maintaining the translation efficiency of at least some genes through preventing degradation of their mRNAs. Prefers RNA molecules that are adenosine-rich close to 3'-end. In addition, may inhibit cell proliferation and cell cycle progression through ubiquitination of beta-catenin/CTNNB1. This Homo sapiens (Human) protein is Terminal nucleotidyltransferase 5B.